Consider the following 138-residue polypeptide: Basic leucine zipper 8 (138 aa).

Residues 30 to 67 (NLPATSDDSSRTAEDNERKRRRKVSNRESARRSRMRKQ) are disordered. Basic and acidic residues predominate over residues 37–47 (DSSRTAEDNER). Positions 45–108 (NERKRRRKVS…EKVIEENMKL (64 aa)) constitute a bZIP domain. The segment at 47 to 68 (RKRRRKVSNRESARRSRMRKQR) is basic motif. Residues 48–55 (KRRRKVSN) carry the Nuclear localization signal motif. The interval 73–87 (LWSMLVQLINKNKSL) is leucine-zipper.

Belongs to the bZIP family. Homodimer.

Its subcellular location is the nucleus. The protein is Basic leucine zipper 8 of Arabidopsis thaliana (Mouse-ear cress).